The chain runs to 302 residues: N-acetylmuramic acid 6-phosphate etherase (302 aa).

The region spanning 58-221 is the SIS domain; it reads IGESFLNGGR…STGAMVKTGK (164 aa). Residue Glu-86 is the Proton donor of the active site. Glu-117 is a catalytic residue.

This sequence belongs to the GCKR-like family. MurNAc-6-P etherase subfamily. As to quaternary structure, homodimer.

It catalyses the reaction N-acetyl-D-muramate 6-phosphate + H2O = N-acetyl-D-glucosamine 6-phosphate + (R)-lactate. Its pathway is amino-sugar metabolism; N-acetylmuramate degradation. Functionally, specifically catalyzes the cleavage of the D-lactyl ether substituent of MurNAc 6-phosphate, producing GlcNAc 6-phosphate and D-lactate. This Clostridium botulinum (strain Okra / Type B1) protein is N-acetylmuramic acid 6-phosphate etherase.